The chain runs to 485 residues: Argininosuccinate lyase (485 aa).

This sequence belongs to the lyase 1 family. Argininosuccinate lyase subfamily.

Its subcellular location is the cytoplasm. It catalyses the reaction 2-(N(omega)-L-arginino)succinate = fumarate + L-arginine. The protein operates within amino-acid biosynthesis; L-arginine biosynthesis; L-arginine from L-ornithine and carbamoyl phosphate: step 3/3. The polypeptide is Argininosuccinate lyase (Paracidovorax citrulli (strain AAC00-1) (Acidovorax citrulli)).